The chain runs to 431 residues: Glutamate-1-semialdehyde 2,1-aminomutase (431 aa).

Residue lysine 269 is modified to N6-(pyridoxal phosphate)lysine.

The protein belongs to the class-III pyridoxal-phosphate-dependent aminotransferase family. HemL subfamily. In terms of assembly, homodimer. Pyridoxal 5'-phosphate is required as a cofactor.

The protein localises to the cytoplasm. The enzyme catalyses (S)-4-amino-5-oxopentanoate = 5-aminolevulinate. It participates in porphyrin-containing compound metabolism; protoporphyrin-IX biosynthesis; 5-aminolevulinate from L-glutamyl-tRNA(Glu): step 2/2. The protein operates within porphyrin-containing compound metabolism; chlorophyll biosynthesis. The sequence is that of Glutamate-1-semialdehyde 2,1-aminomutase from Chlorobium luteolum (strain DSM 273 / BCRC 81028 / 2530) (Pelodictyon luteolum).